The sequence spans 450 residues: Growth/differentiation factor 7 (450 aa).

The first 19 residues, 1-19, serve as a signal peptide directing secretion; that stretch reads MDLSAAAALCLWLLSACRP. Positions 20–321 are excised as a propeptide; it reads RDGLEAAAVL…AVIGGRRRRR (302 aa). N-linked (GlcNAc...) asparagine glycosylation occurs at N83. The disordered stretch occupies residues 296–349; the sequence is ASEPLPDPGTGTASPRAVIGGRRRRRTALAGTRTAQGSGGGAGRGHGRRGRSRC. Residues 340–349 show a composition bias toward basic residues; the sequence is GHGRRGRSRC. 3 disulfide bridges follow: C349–C415, C378–C447, and C382–C449.

Belongs to the TGF-beta family. Homodimer; disulfide-linked.

It is found in the secreted. In terms of biological role, may play an active role in the motor area of the primate neocortex. The sequence is that of Growth/differentiation factor 7 (GDF7) from Homo sapiens (Human).